The chain runs to 178 residues: Riboflavin kinase (178 aa).

Residues Thr39 and Asn41 each contribute to the Mg(2+) site. The active-site Nucleophile is the Glu116.

It belongs to the flavokinase family. Zn(2+) serves as cofactor. It depends on Mg(2+) as a cofactor.

The enzyme catalyses riboflavin + ATP = FMN + ADP + H(+). It participates in cofactor biosynthesis; FMN biosynthesis; FMN from riboflavin (ATP route): step 1/1. Catalyzes the phosphorylation of riboflavin (vitamin B2) to form flavin mononucleotide (FMN) coenzyme. The polypeptide is Riboflavin kinase (FMN1) (Scheffersomyces stipitis (strain ATCC 58785 / CBS 6054 / NBRC 10063 / NRRL Y-11545) (Yeast)).